The chain runs to 210 residues: RNA chaperone ProQ (210 aa).

Residues 118-146 (KAAKPEKKRPARRVAAKGQHAKETTTNKA) are disordered. The segment covering 123–132 (EKKRPARRVA) has biased composition (basic residues).

It belongs to the ProQ family.

The protein resides in the cytoplasm. Functionally, RNA chaperone with significant RNA binding, RNA strand exchange and RNA duplexing activities. The chain is RNA chaperone ProQ from Pasteurella multocida (strain Pm70).